The primary structure comprises 512 residues: Citrate synthase (512 aa).

Residues His-288, His-327, and Asp-383 contribute to the active site. The interval 483-512 (AIPKTATGSKSQLSASIEQSFGEKISPQSH) is disordered. Positions 488 to 501 (ATGSKSQLSASIEQ) are enriched in polar residues.

The protein belongs to the citrate synthase family.

The protein resides in the cytoplasm. It carries out the reaction oxaloacetate + acetyl-CoA + H2O = citrate + CoA + H(+). The protein operates within carbohydrate metabolism; tricarboxylic acid cycle; isocitrate from oxaloacetate: step 1/2. The protein is Citrate synthase (gltA) of Dictyostelium discoideum (Social amoeba).